The primary structure comprises 2122 residues: Unique GC organizer UGO (2122 aa).

5 consecutive transmembrane segments (helical) span residues 19 to 39 (FAVAVALLDLALYVLIGTNSL), 50 to 70 (LFGMITSALIFIIALCGFVIV), 82 to 102 (TYIMPVLIICNIASVFYMQLI), 115 to 135 (VLTFLITGYPYVWLVAFVLIG), and 145 to 165 (VVCSVSLGSSCPPSVWVDVGL). Disordered regions lie at residues 337-403 (AALH…HRSA), 422-532 (FRGL…GPFV), 565-591 (DLRESRERTARAASHDTHAAADDSGLQ), 627-762 (HRRG…GRAN), 785-815 (HAASSEEERPVRPARHSWRRGSGDSRECSAS), 848-870 (MSRRRRREGKSRPHASSVSRAER), 903-949 (SKEG…ASAN), 999-1046 (RNET…LHSR), 1068-1308 (PSDL…HEAV), 1328-1368 (AGLS…SEEE), 1515-1540 (ANSSTAVSSSLPDSTAWQGSGAAASA), 1560-1608 (AAEH…TPHT), and 1639-1727 (QGLG…TFFG). The segment covering 363-374 (RSNTLRGCSGQV) has biased composition (polar residues). Basic and acidic residues-rich tracts occupy residues 503–525 (LRMDEQSGDADKASSDVSRDPAK), 565–585 (DLRESRERTARAASHDTHAAA), and 632–645 (GARDGELVFERGEP). The span at 672-687 (RLSRSRRHKTRTYRRG) shows a compositional bias: basic residues. Over residues 690–699 (SDGTTAGTSD) the composition is skewed to low complexity. Residues 707-720 (LEDEGSDSGQESES) show a composition bias toward acidic residues. Basic residues predominate over residues 725–735 (RRRMRSSRNRR). The span at 741 to 750 (EDSSSGTSVR) shows a compositional bias: low complexity. Over residues 751-760 (SEGRHCREGR) the composition is skewed to basic and acidic residues. The N-linked (GlcNAc...) asparagine glycan is linked to asparagine 762. Positions 848-860 (MSRRRRREGKSRP) are enriched in basic residues. Polar residues-rich tracts occupy residues 999–1011 (RNETEMTASSPAT) and 1072–1097 (SLFTTPPASPSSLNEVQASRSSSARI). An N-linked (GlcNAc...) asparagine glycan is attached at asparagine 1000. Asparagine 1165 carries N-linked (GlcNAc...) asparagine glycosylation. Residues 1220–1261 (SREDLVGEADSHVSPEKEVFVSSRREKREEQVPRSRREERRD) are compositionally biased toward basic and acidic residues. Over residues 1262-1276 (RRGRRWRRGRRRRKA) the composition is skewed to basic residues. 2 stretches are compositionally biased toward basic and acidic residues: residues 1277 to 1289 (RECSETEERRDSS) and 1345 to 1359 (GDMRERQIYETHSDG). Residues 1515-1527 (ANSSTAVSSSLPD) are compositionally biased toward polar residues. Residue asparagine 1516 is glycosylated (N-linked (GlcNAc...) asparagine). 2 stretches are compositionally biased toward low complexity: residues 1528-1540 (STAWQGSGAAASA) and 1597-1608 (TQTPQTPQTPHT). A compositionally biased stretch (polar residues) spans 1684 to 1693 (LSATPSTRLQ). Transmembrane regions (helical) follow at residues 1859–1879 (VAWLLFLICFYATAFHGLLRL), 1956–1976 (MLALSFLQFVYAVFDNTWHLI), 1989–2009 (IIPASPSLEIAAVQTVYILAV), 2017–2037 (IFLLYIITYIIIFFVALPPGV), and 2040–2060 (VQLFTISMAGWLFTCVGGQLF). A disordered region spans residues 2102–2122 (DEGSEDEVSMGSGHLVGDRSA).

Interacts with guanylate cyclase GC; the interaction regulates guanylate cyclase GC trafficking and catalytic activity.

It localises to the cell membrane. Its function is as follows. In tachyzoites, required for the cellular trafficking of guanylate cyclase GC to the cell membrane and for GC guanylate cyclase activity. The chain is Unique GC organizer UGO from Toxoplasma gondii (strain ATCC 50853 / GT1).